Here is a 337-residue protein sequence, read N- to C-terminus: tRNA N6-adenosine threonylcarbamoyltransferase (337 aa).

Positions 111 and 115 each coordinate Fe cation. Residues 134 to 138 (LVSGG), Asp-167, Gly-180, and Asn-272 each bind substrate. Asp-300 contributes to the Fe cation binding site.

It belongs to the KAE1 / TsaD family. Fe(2+) is required as a cofactor.

Its subcellular location is the cytoplasm. The enzyme catalyses L-threonylcarbamoyladenylate + adenosine(37) in tRNA = N(6)-L-threonylcarbamoyladenosine(37) in tRNA + AMP + H(+). In terms of biological role, required for the formation of a threonylcarbamoyl group on adenosine at position 37 (t(6)A37) in tRNAs that read codons beginning with adenine. Is involved in the transfer of the threonylcarbamoyl moiety of threonylcarbamoyl-AMP (TC-AMP) to the N6 group of A37, together with TsaE and TsaB. TsaD likely plays a direct catalytic role in this reaction. This Salmonella choleraesuis (strain SC-B67) protein is tRNA N6-adenosine threonylcarbamoyltransferase.